Here is a 318-residue protein sequence, read N- to C-terminus: Biotin synthase (318 aa).

The Radical SAM core domain occupies 44–273 (LCGNKFDLCT…TVQIRLAGGR (230 aa)). Residues C62, C66, and C69 each contribute to the [4Fe-4S] cluster site. [2Fe-2S] cluster is bound by residues S106, C138, C198, and R268.

The protein belongs to the radical SAM superfamily. Biotin synthase family. As to quaternary structure, homodimer. [4Fe-4S] cluster is required as a cofactor. Requires [2Fe-2S] cluster as cofactor.

It carries out the reaction (4R,5S)-dethiobiotin + (sulfur carrier)-SH + 2 reduced [2Fe-2S]-[ferredoxin] + 2 S-adenosyl-L-methionine = (sulfur carrier)-H + biotin + 2 5'-deoxyadenosine + 2 L-methionine + 2 oxidized [2Fe-2S]-[ferredoxin]. It functions in the pathway cofactor biosynthesis; biotin biosynthesis; biotin from 7,8-diaminononanoate: step 2/2. Catalyzes the conversion of dethiobiotin (DTB) to biotin by the insertion of a sulfur atom into dethiobiotin via a radical-based mechanism. This is Biotin synthase from Clostridium botulinum (strain Hall / ATCC 3502 / NCTC 13319 / Type A).